The following is a 259-amino-acid chain: L-ornithine N(alpha)-acyltransferase (259 aa).

It belongs to the acetyltransferase family. OlsB subfamily.

It carries out the reaction a (3R)-hydroxyacyl-[ACP] + L-ornithine = a lyso-ornithine lipid + holo-[ACP] + H(+). Its pathway is lipid metabolism. Functionally, catalyzes the first step in the biosynthesis of ornithine lipids, which are phosphorus-free membrane lipids. Catalyzes the 3-hydroxyacyl-acyl carrier protein-dependent acylation of ornithine to form lyso-ornithine lipid (LOL). This Rhodobacter capsulatus (strain ATCC BAA-309 / NBRC 16581 / SB1003) protein is L-ornithine N(alpha)-acyltransferase.